Here is a 146-residue protein sequence, read N- to C-terminus: Large ribosomal subunit protein uL11 (146 aa).

Belongs to the universal ribosomal protein uL11 family. Part of the ribosomal stalk of the 50S ribosomal subunit. Interacts with L10 and the large rRNA to form the base of the stalk. L10 forms an elongated spine to which L12 dimers bind in a sequential fashion forming a multimeric L10(L12)X complex. Post-translationally, one or more lysine residues are methylated.

In terms of biological role, forms part of the ribosomal stalk which helps the ribosome interact with GTP-bound translation factors. The sequence is that of Large ribosomal subunit protein uL11 from Salinibacter ruber (strain DSM 13855 / M31).